The primary structure comprises 542 residues: Malate synthase, glyoxysomal (542 aa).

The active-site Proton acceptor is R168. D449 acts as the Proton donor in catalysis. The short motif at 540–542 (SKL) is the Microbody targeting signal element.

The protein belongs to the malate synthase family.

It is found in the glyoxysome. It catalyses the reaction glyoxylate + acetyl-CoA + H2O = (S)-malate + CoA + H(+). It functions in the pathway carbohydrate metabolism; glyoxylate cycle; (S)-malate from isocitrate: step 2/2. This Neurospora crassa (strain ATCC 24698 / 74-OR23-1A / CBS 708.71 / DSM 1257 / FGSC 987) protein is Malate synthase, glyoxysomal (acu-9).